Here is a 393-residue protein sequence, read N- to C-terminus: NAD(P)H-quinone oxidoreductase subunit H, chloroplastic (393 aa).

Belongs to the complex I 49 kDa subunit family. As to quaternary structure, NDH is composed of at least 16 different subunits, 5 of which are encoded in the nucleus.

It is found in the plastid. The protein resides in the chloroplast thylakoid membrane. The catalysed reaction is a plastoquinone + NADH + (n+1) H(+)(in) = a plastoquinol + NAD(+) + n H(+)(out). The enzyme catalyses a plastoquinone + NADPH + (n+1) H(+)(in) = a plastoquinol + NADP(+) + n H(+)(out). In terms of biological role, NDH shuttles electrons from NAD(P)H:plastoquinone, via FMN and iron-sulfur (Fe-S) centers, to quinones in the photosynthetic chain and possibly in a chloroplast respiratory chain. The immediate electron acceptor for the enzyme in this species is believed to be plastoquinone. Couples the redox reaction to proton translocation, and thus conserves the redox energy in a proton gradient. The polypeptide is NAD(P)H-quinone oxidoreductase subunit H, chloroplastic (Cicer arietinum (Chickpea)).